Reading from the N-terminus, the 479-residue chain is UDP-glycosyltransferase 85A5 (479 aa).

UDP-alpha-D-glucose is bound by residues Ser-301, 358–360 (CPQ), 375–383 (HSGWNSTLE), and 397–400 (FAEQ).

It belongs to the UDP-glycosyltransferase family. As to expression, expressed in roots, shoots and leaves.

In Arabidopsis thaliana (Mouse-ear cress), this protein is UDP-glycosyltransferase 85A5 (UGT85A5).